The following is a 93-amino-acid chain: Exodeoxyribonuclease 7 small subunit (93 aa).

The segment covering 1 to 17 (MAKSSASSLSSAKPVAA) has biased composition (low complexity). Residues 1–22 (MAKSSASSLSSAKPVAAGPDAS) are disordered.

This sequence belongs to the XseB family. In terms of assembly, heterooligomer composed of large and small subunits.

The protein localises to the cytoplasm. The enzyme catalyses Exonucleolytic cleavage in either 5'- to 3'- or 3'- to 5'-direction to yield nucleoside 5'-phosphates.. Its function is as follows. Bidirectionally degrades single-stranded DNA into large acid-insoluble oligonucleotides, which are then degraded further into small acid-soluble oligonucleotides. The chain is Exodeoxyribonuclease 7 small subunit from Polaromonas naphthalenivorans (strain CJ2).